Consider the following 451-residue polypeptide: Crh-like protein 2 (451 aa).

The first 21 residues, 1 to 21 (MQFNSLVLLAGATILSPFVQA), serve as a signal peptide directing secretion. The GH16 domain maps to 22-241 (QTWTTCNPLN…FTKVPFTMYV (220 aa)). A disulfide bridge connects residues C27 and C34. N-linked (GlcNAc...) asparagine glycosylation is found at N31, N43, N49, and N59. E121 functions as the Nucleophile in the catalytic mechanism. E125 acts as the Proton donor in catalysis. E125 serves as a coordination point for chitin. N130, N143, and N165 each carry an N-linked (GlcNAc...) asparagine glycan. Chitin is bound by residues R206, W210, and T222. N273 carries N-linked (GlcNAc...) asparagine glycosylation. A helical membrane pass occupies residues 305 to 325 (VYCGGGAAVAALVSAFLFTFL). An N-linked (GlcNAc...) asparagine glycan is attached at N366.

The protein belongs to the glycosyl hydrolase 16 family. CRH1 subfamily. Forms homodimers as well as heterodimers with other crh protein members crh1 and crh3. Dimerization may be necessary for the transglycosylation activity.

Its subcellular location is the membrane. It catalyses the reaction Random endo-hydrolysis of N-acetyl-beta-D-glucosaminide (1-&gt;4)-beta-linkages in chitin and chitodextrins.. In terms of biological role, dual chitinase/transglycosylase that plays a role in cell wall architecture. Chitinase and transglycosylase activities are coupled. Required for the polysaccharide cross-linking at the septa and the cell wall. More specifically, transfers chitin to 1,6-beta-glucan in the cell wall. The protein is Crh-like protein 2 of Botryotinia fuckeliana (strain B05.10) (Noble rot fungus).